The primary structure comprises 248 residues: Type II methyltransferase M.AquIA (248 aa).

Residues 3–248 (KKLISLFSGA…IKDRIKNHGY (246 aa)) enclose the SAM-dependent MTase C5-type domain. Cysteine 82 is an active-site residue.

It belongs to the class I-like SAM-binding methyltransferase superfamily. C5-methyltransferase family. As to quaternary structure, heterodimer of an alpha and a beta subunit.

It carries out the reaction a 2'-deoxycytidine in DNA + S-adenosyl-L-methionine = a 5-methyl-2'-deoxycytidine in DNA + S-adenosyl-L-homocysteine + H(+). Functionally, a methylase, recognizes the double-stranded sequence 5'-CYCGRG-3', methylates C-1 on both strands, and protects the DNA from cleavage by the AquI endonuclease. This chain is Type II methyltransferase M.AquIA (aquIMA), found in Picosynechococcus sp. (strain ATCC 27264 / PCC 7002 / PR-6) (Agmenellum quadruplicatum).